The primary structure comprises 175 residues: Disulfide bond formation protein B (175 aa).

Residues 1 to 13 (MVSNWLDAAPRRV) are Cytoplasmic-facing. A helical membrane pass occupies residues 14 to 30 (LALISAACIAMLAFGMY). Over 31–48 (LQHVVGLEPCPMCIVQRY) the chain is Periplasmic. A disulfide bridge links C40 with C43. The chain crosses the membrane as a helical span at residues 49–65 (ALIGVAVFTGLGSLRGG). The Cytoplasmic segment spans residues 66 to 70 (RGWWM). Residues 71–88 (TWGVLALLLSGFGAFVAA) traverse the membrane as a helical segment. The Periplasmic segment spans residues 89–144 (RQSWLQWYPPEIATCGRDFYGMIENFPISRAIPMIFRGSGDCAAIDWTFLGGSIAN). C103 and C130 are disulfide-bonded. The chain crosses the membrane as a helical span at residues 145–163 (WSFVCFVVMALVLLVMLLR). At 164-175 (APRPARGGFSAA) the chain is on the cytoplasmic side.

This sequence belongs to the DsbB family.

It is found in the cell inner membrane. Required for disulfide bond formation in some periplasmic proteins. Acts by oxidizing the DsbA protein. This is Disulfide bond formation protein B from Paracidovorax citrulli (strain AAC00-1) (Acidovorax citrulli).